The following is a 37-amino-acid chain: U12-myrmicitoxin-Mri1a (37 aa).

The N-terminal stretch at 1–23 is a signal peptide; that stretch reads MKTIELITIFAMITTLMVTVVAG. A propeptide spanning residues 24–25 is cleaved from the precursor; sequence DP. The residue at position 35 (Val-35) is a Valine amide.

In terms of tissue distribution, expressed by the venom gland.

Its subcellular location is the secreted. Its function is as follows. Toxin that induces mild paralysis, and reduces survival and reproduction when injected into aphids (A.pisum). May affect various processes in the aphid, including wound healing and hemolymph coagulation. It does not increase the sensitivity of the aphids to the chemical insecticides imidacloprid, methomyl and Spirotetramat. Has no insecticidal activity when injected into blowfly (L.caesar). Does not display any antibacterial or antifungal activity. In Manica rubida (European giant red ant), this protein is U12-myrmicitoxin-Mri1a.